The primary structure comprises 798 residues: Penicillin-binding protein 1A (798 aa).

The Cytoplasmic portion of the chain corresponds to 1 to 9; sequence MIKKIITTC. Residues 10-30 traverse the membrane as a helical; Signal-anchor for type II membrane protein segment; that stretch reads MGLNNGLALFGVGLIAIAILV. Topologically, residues 31 to 798 are periplasmic; it reads TYPKLPSLDS…NNRQQLDSLF (768 aa). Residues 50–218 are transglycosylase; the sequence is LTIYSSDGQV…SAYNPIVNPE (169 aa). The Proton donor; for transglycosylase activity role is filled by glutamate 88. The interval 413–699 is transpeptidase; that stretch reads TVVQEPLLQG…GTIAVPVWVE (287 aa). Serine 460 serves as the catalytic Acyl-ester intermediate; for transpeptidase activity. Residues 734-798 are disordered; that stretch reads TSSDLALDNS…NNRQQLDSLF (65 aa). Polar residues predominate over residues 782 to 798; that stretch reads LPSNTGNNNRQQLDSLF.

In the N-terminal section; belongs to the glycosyltransferase 51 family. It in the C-terminal section; belongs to the transpeptidase family.

The protein localises to the cell inner membrane. The enzyme catalyses [GlcNAc-(1-&gt;4)-Mur2Ac(oyl-L-Ala-gamma-D-Glu-L-Lys-D-Ala-D-Ala)](n)-di-trans,octa-cis-undecaprenyl diphosphate + beta-D-GlcNAc-(1-&gt;4)-Mur2Ac(oyl-L-Ala-gamma-D-Glu-L-Lys-D-Ala-D-Ala)-di-trans,octa-cis-undecaprenyl diphosphate = [GlcNAc-(1-&gt;4)-Mur2Ac(oyl-L-Ala-gamma-D-Glu-L-Lys-D-Ala-D-Ala)](n+1)-di-trans,octa-cis-undecaprenyl diphosphate + di-trans,octa-cis-undecaprenyl diphosphate + H(+). The catalysed reaction is Preferential cleavage: (Ac)2-L-Lys-D-Ala-|-D-Ala. Also transpeptidation of peptidyl-alanyl moieties that are N-acyl substituents of D-alanine.. It functions in the pathway cell wall biogenesis; peptidoglycan biosynthesis. In terms of biological role, cell wall formation. Synthesis of cross-linked peptidoglycan from the lipid intermediates. The enzyme has a penicillin-insensitive transglycosylase N-terminal domain (formation of linear glycan strands) and a penicillin-sensitive transpeptidase C-terminal domain (cross-linking of the peptide subunits). The polypeptide is Penicillin-binding protein 1A (mrcA) (Neisseria flavescens).